Here is a 314-residue protein sequence, read N- to C-terminus: Nucleotide-binding protein CE1710 (314 aa).

The disordered stretch occupies residues 1–29; the sequence is MNQTPGSTVPETATPVTSPASSPSAPETT. Residues 7 to 29 are compositionally biased toward low complexity; it reads STVPETATPVTSPASSPSAPETT. An ATP-binding site is contributed by 37–44; that stretch reads GMSGAGLS. GTP is bound at residue 88-91; the sequence is DVRS.

Belongs to the RapZ-like family.

Its function is as follows. Displays ATPase and GTPase activities. The protein is Nucleotide-binding protein CE1710 of Corynebacterium efficiens (strain DSM 44549 / YS-314 / AJ 12310 / JCM 11189 / NBRC 100395).